A 314-amino-acid polypeptide reads, in one-letter code: Homoserine kinase (314 aa).

95–105 (PHSRGLGSSAA) is a binding site for ATP.

Belongs to the GHMP kinase family. Homoserine kinase subfamily.

Its subcellular location is the cytoplasm. It catalyses the reaction L-homoserine + ATP = O-phospho-L-homoserine + ADP + H(+). The protein operates within amino-acid biosynthesis; L-threonine biosynthesis; L-threonine from L-aspartate: step 4/5. In terms of biological role, catalyzes the ATP-dependent phosphorylation of L-homoserine to L-homoserine phosphate. This Mycolicibacterium vanbaalenii (strain DSM 7251 / JCM 13017 / BCRC 16820 / KCTC 9966 / NRRL B-24157 / PYR-1) (Mycobacterium vanbaalenii) protein is Homoserine kinase.